The primary structure comprises 209 residues: Tektin bundle-interacting protein 1 (209 aa).

In terms of assembly, microtubule inner protein component of sperm flagellar doublet microtubules.

It is found in the cytoplasm. The protein resides in the cytoskeleton. It localises to the cilium axoneme. Its subcellular location is the flagellum axoneme. Functionally, microtubule inner protein (MIP) part of the dynein-decorated doublet microtubules (DMTs) in cilia axoneme, which is required for motile cilia beating. Located at the center of the tektin bundle where may function to recruit tektins or stabilize the bundle. The sequence is that of Tektin bundle-interacting protein 1 from Homo sapiens (Human).